The following is a 522-amino-acid chain: N-acetylgalactosamine-6-sulfatase (522 aa).

The first 25 residues, 1-25 (MAPVAAATGWRLLLVLSAAGLGAAG), serve as a signal peptide directing secretion. Positions 27 to 379 (PQPPNILLLL…PAMLGGQLTD (353 aa)) are catalytic domain. Residues Asp-38, Asp-39, and Cys-78 each contribute to the Ca(2+) site. The active-site Nucleophile is the Cys-78. The residue at position 78 (Cys-78) is a 3-oxoalanine (Cys). Residue His-141 is part of the active site. The N-linked (GlcNAc...) asparagine glycan is linked to Asn-203. The Ca(2+) site is built by Asp-288 and Asn-289. An intrachain disulfide couples Cys-308 to Cys-419. A glycan (N-linked (GlcNAc...) asparagine) is linked at Asn-423. Intrachain disulfides connect Cys-489–Cys-518 and Cys-501–Cys-507.

It belongs to the sulfatase family. In terms of assembly, homodimer. The cofactor is Ca(2+). Post-translationally, the conversion to 3-oxoalanine (also known as C-formylglycine, FGly), of a serine or cysteine residue in prokaryotes and of a cysteine residue in eukaryotes, is critical for catalytic activity.

The protein resides in the lysosome. It carries out the reaction Hydrolysis of the 6-sulfate groups of the N-acetyl-D-galactosamine 6-sulfate units of chondroitin sulfate and of the D-galactose 6-sulfate units of keratan sulfate.. The polypeptide is N-acetylgalactosamine-6-sulfatase (GALNS) (Canis lupus familiaris (Dog)).